The chain runs to 350 residues: tRNA-splicing endonuclease (350 aa).

Active-site residues include Tyr286, His297, and Lys328.

Belongs to the tRNA-intron endonuclease family. Archaeal long subfamily. Homodimer.

The catalysed reaction is pretRNA = a 3'-half-tRNA molecule with a 5'-OH end + a 5'-half-tRNA molecule with a 2',3'-cyclic phosphate end + an intron with a 2',3'-cyclic phosphate and a 5'-hydroxyl terminus.. In terms of biological role, endonuclease that removes tRNA introns. Cleaves pre-tRNA at the 5'- and 3'-splice sites to release the intron. The products are an intron and two tRNA half-molecules bearing 2',3' cyclic phosphate and 5'-OH termini. Recognizes a pseudosymmetric substrate in which 2 bulged loops of 3 bases are separated by a stem of 4 bp. This Methanosarcina barkeri (strain Fusaro / DSM 804) protein is tRNA-splicing endonuclease.